The following is a 185-amino-acid chain: UPF0301 protein Shew_1144 (185 aa).

This sequence belongs to the UPF0301 (AlgH) family.

The chain is UPF0301 protein Shew_1144 from Shewanella loihica (strain ATCC BAA-1088 / PV-4).